The primary structure comprises 248 residues: Trypsin I-P38 (248 aa).

Residues Met-1–Ala-15 form the signal peptide. The propeptide at Phe-16–Lys-25 is activation peptide. The region spanning Ile-26–Ser-246 is the Peptidase S1 domain. 6 disulfide bridges follow: Cys-32–Cys-162, Cys-50–Cys-66, Cys-134–Cys-235, Cys-141–Cys-208, Cys-173–Cys-187, and Cys-198–Cys-222. Residue His-65 is the Charge relay system of the active site. Glu-77, Asn-79, and Glu-87 together coordinate Ca(2+). The active-site Charge relay system is Asp-109. Ser-202 functions as the Charge relay system in the catalytic mechanism.

This sequence belongs to the peptidase S1 family. Ca(2+) is required as a cofactor. High levels are seen in the pancreas while lower levels are found in the liver, spleen and thymus.

Its subcellular location is the secreted. It is found in the extracellular space. It carries out the reaction Preferential cleavage: Arg-|-Xaa, Lys-|-Xaa.. This chain is Trypsin I-P38, found in Gallus gallus (Chicken).